Consider the following 163-residue polypeptide: Probable chemoreceptor glutamine deamidase CheD (163 aa).

It belongs to the CheD family.

It carries out the reaction L-glutaminyl-[protein] + H2O = L-glutamyl-[protein] + NH4(+). Its function is as follows. Probably deamidates glutamine residues to glutamate on methyl-accepting chemotaxis receptors (MCPs), playing an important role in chemotaxis. The protein is Probable chemoreceptor glutamine deamidase CheD of Borreliella afzelii (strain PKo) (Borrelia afzelii).